A 425-amino-acid polypeptide reads, in one-letter code: Histidine--tRNA ligase (425 aa).

This sequence belongs to the class-II aminoacyl-tRNA synthetase family. In terms of assembly, homodimer.

It localises to the cytoplasm. The catalysed reaction is tRNA(His) + L-histidine + ATP = L-histidyl-tRNA(His) + AMP + diphosphate + H(+). The polypeptide is Histidine--tRNA ligase (Aeromonas hydrophila subsp. hydrophila (strain ATCC 7966 / DSM 30187 / BCRC 13018 / CCUG 14551 / JCM 1027 / KCTC 2358 / NCIMB 9240 / NCTC 8049)).